The primary structure comprises 488 residues: Auxin transporter-like protein 1 (488 aa).

A disordered region spans residues 1-36; the sequence is MSGEKQAEESIVVSGEDEVAGRKVEDSAAEEDIDGN. Over 1-64 the chain is Cytoplasmic; sequence MSGEKQAEES…DAWFSCASNQ (64 aa). Residues 65-82 form a helical membrane-spanning segment; it reads VAQVLLTLPYSFSQLGML. At 83 to 84 the chain is on the extracellular side; it reads SG. The helical transmembrane segment at 85–105 threads the bilayer; the sequence is ILLQIFYGLMGSWTAYLISVL. Over 106 to 141 the chain is Cytoplasmic; sequence YVEYRARMEKQEAKSFKNHVIQWFEVLDGLLGPYWK. The helical transmembrane segment at 142-162 threads the bilayer; the sequence is AAGLAFNCTFLLFGSVIQLIA. Residues 163–178 are Extracellular-facing; the sequence is CASNIYYINDRLDKRT. Residues 179-199 traverse the membrane as a helical segment; that stretch reads WTYIFGACCATTVFIPSFHNY. At 200-202 the chain is on the cytoplasmic side; the sequence is RIW. Residues 203-223 form a helical membrane-spanning segment; sequence SFLGLGMTTYTAWYLTIASFL. Over 224 to 238 the chain is Extracellular; the sequence is HGQAEGVTHSGPTKL. A helical membrane pass occupies residues 239 to 259; the sequence is VLYFTGATNILYTFGGHAVTV. Topologically, residues 260–273 are cytoplasmic; that stretch reads EIMHAMWKPRKFKS. The chain crosses the membrane as a helical span at residues 274 to 294; sequence IYLMATLYVFTLTLPSASAVY. Topologically, residues 295 to 320 are extracellular; that stretch reads WAFGDQLLNHSNAFSLLPKTRFRDTA. A glycan (N-linked (GlcNAc...) asparagine) is linked at N303. Residues 321–341 traverse the membrane as a helical segment; the sequence is VILMLIHQFITFGFACTPLYF. The Cytoplasmic portion of the chain corresponds to 342–362; sequence VWEKAIGMHHTKSLCLRALVR. Residues 363-383 form a helical membrane-spanning segment; the sequence is LPVVVPIWFLAIIFPFFGPIN. Residue S384 is a topological domain, extracellular. A helical membrane pass occupies residues 385–405; sequence AVGALLVTFTVYIIPALAHML. Residues 406 to 427 are Cytoplasmic-facing; it reads TYRTASARRNAAEKPPFFIPSW. A helical transmembrane segment spans residues 428-448; the sequence is AGVYVINAFIVVWVLVLGFGF. The Extracellular portion of the chain corresponds to 449-488; it reads GGWASMTNFIRQIDTFGLFAKCYQCKPPPAPIAAGAHHRR.

It belongs to the amino acid/polyamine transporter 2 family. Amino acid/auxin permease (AAAP) (TC 2.A.18.1) subfamily.

The protein localises to the cell membrane. In terms of biological role, carrier protein involved in proton-driven auxin influx. Mediates the formation of auxin gradient from developing leaves (site of auxin biosynthesis) to tips by contributing to the loading of auxin in vascular tissues and facilitating acropetal (base to tip) auxin transport within inner tissues of the root apex, and basipetal (tip to base) auxin transport within outer tissues of the root apex. The protein is Auxin transporter-like protein 1 (LAX1) of Arabidopsis thaliana (Mouse-ear cress).